Consider the following 300-residue polypeptide: Virginiamycin B lyase (300 aa).

Histidine 231 is a binding site for substrate. Glutamate 270 serves as a coordination point for Mg(2+). The active-site Proton acceptor is the histidine 272. Glutamate 287 lines the Mg(2+) pocket.

The protein belongs to the Vgb family. As to quaternary structure, monomer. Mg(2+) is required as a cofactor.

In terms of biological role, inactivates the type B streptogramin antibiotics by linearizing the lactone ring at the ester linkage, generating a free phenylglycine carboxylate and converting the threonyl moiety into 2-amino-butenoic acid. The protein is Virginiamycin B lyase of Saccharopolyspora erythraea (strain ATCC 11635 / DSM 40517 / JCM 4748 / NBRC 13426 / NCIMB 8594 / NRRL 2338).